The chain runs to 77 residues: MIVKVKTLTGKEISVELKESDLVYHIKELLEEKEGIPPSQQRLIFQGKQIDDKLTVTDAHLVEGMQLHLVLTLRGGN.

In terms of domain architecture, Ubiquitin-like spans 1-74 (MIVKVKTLTG…MQLHLVLTLR (74 aa)). Gly-76 participates in a covalent cross-link: Glycyl lysine isopeptide (Gly-Lys) (interchain with K-? in acceptor proteins). Residue Asn-77 is a propeptide.

As to quaternary structure, interacts with CDC53 and DCN1.

Ubiquitin-like protein modifier that can be covalently attached to lysine residues of target proteins. Activated by the dimeric UBA3-ULA1 E1 enzyme and conjugated by the E2 UBC12 to substrate proteins. RUB1-conjugated (neddylated) substrate proteins include the cullins CDC53, RTT101 and CUL3, and the modification enhances the ubiquitin-ligase activity of the corresponding cullin-RING-based E3 ubiquitin-protein ligase complexes (CRLs). The polypeptide is NEDD8-like protein RUB1 (RUB1) (Saccharomyces cerevisiae (strain ATCC 204508 / S288c) (Baker's yeast)).